A 445-amino-acid polypeptide reads, in one-letter code: 3-phosphoshikimate 1-carboxyvinyltransferase (445 aa).

The interval 1 to 24 (MEHAATLPQTSRRPATPLTGTITV) is disordered. Residues 7 to 22 (LPQTSRRPATPLTGTI) show a composition bias toward polar residues. 3-phosphoshikimate is bound by residues K28, S29, and R33. A phosphoenolpyruvate-binding site is contributed by K28. Phosphoenolpyruvate is bound by residues G101 and R129. 3-phosphoshikimate contacts are provided by S174, Q176, D326, and K353. Residue Q176 participates in phosphoenolpyruvate binding. Catalysis depends on D326, which acts as the Proton acceptor. Positions 357 and 399 each coordinate phosphoenolpyruvate.

It belongs to the EPSP synthase family. Monomer.

The protein resides in the cytoplasm. It catalyses the reaction 3-phosphoshikimate + phosphoenolpyruvate = 5-O-(1-carboxyvinyl)-3-phosphoshikimate + phosphate. It participates in metabolic intermediate biosynthesis; chorismate biosynthesis; chorismate from D-erythrose 4-phosphate and phosphoenolpyruvate: step 6/7. Its function is as follows. Catalyzes the transfer of the enolpyruvyl moiety of phosphoenolpyruvate (PEP) to the 5-hydroxyl of shikimate-3-phosphate (S3P) to produce enolpyruvyl shikimate-3-phosphate and inorganic phosphate. The sequence is that of 3-phosphoshikimate 1-carboxyvinyltransferase from Acidiphilium cryptum (strain JF-5).